A 369-amino-acid polypeptide reads, in one-letter code: UDP-3-O-acylglucosamine N-acyltransferase (369 aa).

His-252 acts as the Proton acceptor in catalysis. Residues 348-369 are disordered; sequence ERRQRGENNAPAQNKQDEEKSS.

This sequence belongs to the transferase hexapeptide repeat family. LpxD subfamily. Homotrimer.

It catalyses the reaction a UDP-3-O-[(3R)-3-hydroxyacyl]-alpha-D-glucosamine + a (3R)-hydroxyacyl-[ACP] = a UDP-2-N,3-O-bis[(3R)-3-hydroxyacyl]-alpha-D-glucosamine + holo-[ACP] + H(+). The protein operates within bacterial outer membrane biogenesis; LPS lipid A biosynthesis. In terms of biological role, catalyzes the N-acylation of UDP-3-O-acylglucosamine using 3-hydroxyacyl-ACP as the acyl donor. Is involved in the biosynthesis of lipid A, a phosphorylated glycolipid that anchors the lipopolysaccharide to the outer membrane of the cell. The sequence is that of UDP-3-O-acylglucosamine N-acyltransferase from Cupriavidus metallidurans (strain ATCC 43123 / DSM 2839 / NBRC 102507 / CH34) (Ralstonia metallidurans).